The chain runs to 531 residues: Sterol 26-hydroxylase, mitochondrial (531 aa).

The N-terminal 33 residues, Met1–Ala33, are a transit peptide targeting the mitochondrion. The residue at position 283 (Lys283) is an N6-acetyllysine. Residues Pro384 to Pro398 are sterol-binding. Residue Cys476 coordinates heme. Lys509 and Lys520 each carry N6-acetyllysine.

Belongs to the cytochrome P450 family. Interacts with HSP70; this interaction is required for initial targeting to mitochondria. The cofactor is heme. As to expression, expressed in the neural retina and underlying retinal pigment epithelium (at protein level). Expressed in the gray and white matter of cerebellum (at protein level).

The protein localises to the mitochondrion inner membrane. It catalyses the reaction 5beta-cholestane-3alpha,7alpha,12alpha-triol + 6 reduced [adrenodoxin] + 3 O2 + 5 H(+) = (25R)-3alpha,7alpha,12alpha-trihydroxy-5beta-cholestan-26-oate + 6 oxidized [adrenodoxin] + 4 H2O. It carries out the reaction cholestanol + 2 reduced [adrenodoxin] + O2 + 2 H(+) = (25R)-26-hydroxycholestanol + 2 oxidized [adrenodoxin] + H2O. The enzyme catalyses (25R)-3beta-hydroxycholest-5-en-7-one-26-al + 2 reduced [adrenodoxin] + O2 + H(+) = (25R)-3beta-hydroxycholest-5-en-7-one-26-oate + 2 oxidized [adrenodoxin] + H2O. The catalysed reaction is (25R)-3beta,26-dihydroxycholest-5-en-7-one + 2 reduced [adrenodoxin] + O2 + 2 H(+) = (25R)-3beta-hydroxycholest-5-en-7-one-26-al + 2 oxidized [adrenodoxin] + 2 H2O. It catalyses the reaction 7-oxocholesterol + 2 reduced [adrenodoxin] + O2 + 2 H(+) = (25R)-3beta,26-dihydroxycholest-5-en-7-one + 2 oxidized [adrenodoxin] + H2O. It carries out the reaction calciol + 2 reduced [adrenodoxin] + O2 + 2 H(+) = calcidiol + 2 oxidized [adrenodoxin] + H2O. The enzyme catalyses (25R)-5beta-cholestane-3alpha,7alpha,12alpha,26-tetrol + 2 reduced [adrenodoxin] + O2 + 2 H(+) = (25R)-3alpha,7alpha,12alpha-trihydroxy-5beta-cholestan-26-al + 2 oxidized [adrenodoxin] + 2 H2O. The catalysed reaction is 2 reduced [adrenodoxin] + cholesterol + O2 + 2 H(+) = (25R)-cholest-5-ene-3beta,26-diol + 2 oxidized [adrenodoxin] + H2O. It catalyses the reaction (25R)-3beta,4beta-dihydroxycholest-5-en-26-al + 2 reduced [adrenodoxin] + O2 + H(+) = (25R)-3beta,4beta-dihydroxycholest-5-en-26-oate + 2 oxidized [adrenodoxin] + H2O. It carries out the reaction (25R)-4beta,26-dihydroxycholesterol + 2 reduced [adrenodoxin] + O2 + 2 H(+) = (25R)-3beta,4beta-dihydroxycholest-5-en-26-al + 2 oxidized [adrenodoxin] + 2 H2O. The enzyme catalyses 4beta-hydroxycholesterol + 2 reduced [adrenodoxin] + O2 + 2 H(+) = (25R)-4beta,26-dihydroxycholesterol + 2 oxidized [adrenodoxin] + H2O. The catalysed reaction is (25R)-3beta-hydroxy-5-cholesten-26-al + 2 reduced [adrenodoxin] + O2 + H(+) = (25R)-3beta-hydroxy-5-cholestenoate + 2 oxidized [adrenodoxin] + H2O. It catalyses the reaction (25R)-cholest-5-ene-3beta,26-diol + 2 reduced [adrenodoxin] + O2 + 2 H(+) = (25R)-3beta-hydroxy-5-cholesten-26-al + 2 oxidized [adrenodoxin] + 2 H2O. It carries out the reaction (25R)-3alpha,7alpha,12alpha-trihydroxy-5beta-cholestan-26-al + 2 reduced [adrenodoxin] + O2 + H(+) = (25R)-3alpha,7alpha,12alpha-trihydroxy-5beta-cholestan-26-oate + 2 oxidized [adrenodoxin] + H2O. The enzyme catalyses 5beta-cholestane-3alpha,7alpha,12alpha-triol + 2 reduced [adrenodoxin] + O2 + 2 H(+) = (25R)-5beta-cholestane-3alpha,7alpha,12alpha,26-tetrol + 2 oxidized [adrenodoxin] + H2O. The protein operates within hormone biosynthesis; cholecalciferol biosynthesis. It functions in the pathway steroid metabolism; cholesterol degradation. Its pathway is lipid metabolism; bile acid biosynthesis. Functionally, cytochrome P450 monooxygenase that catalyzes regio- and stereospecific hydroxylation of cholesterol and its derivatives. Hydroxylates (with R stereochemistry) the terminal methyl group of cholesterol side-chain in a three step reaction to yield at first a C26 alcohol, then a C26 aldehyde and finally a C26 acid. Regulates cholesterol homeostasis by catalyzing the conversion of excess cholesterol to bile acids via both the 'neutral' (classic) and the 'acid' (alternative) pathways. May also regulate cholesterol homeostasis via generation of active oxysterols, which act as ligands for NR1H2 and NR1H3 nuclear receptors, modulating the transcription of genes involved in lipid metabolism. Plays a role in cholestanol metabolism in the cerebellum. Similarly to cholesterol, hydroxylates cholestanol and may facilitate sterol diffusion through the blood-brain barrier to the systemic circulation for further degradation. Also hydroxylates retinal 7-ketocholesterol, a noxious oxysterol with pro-inflammatory and pro-apoptotic effects, and may play a role in its elimination from the retinal pigment epithelium. May play a redundant role in vitamin D biosynthesis. Catalyzes 25-hydroxylation of vitamin D3 that is required for its conversion to a functionally active form. The sequence is that of Sterol 26-hydroxylase, mitochondrial from Homo sapiens (Human).